Consider the following 669-residue polypeptide: Glycine--tRNA ligase beta subunit (669 aa).

Belongs to the class-II aminoacyl-tRNA synthetase family. As to quaternary structure, tetramer of two alpha and two beta subunits.

The protein localises to the cytoplasm. The enzyme catalyses tRNA(Gly) + glycine + ATP = glycyl-tRNA(Gly) + AMP + diphosphate. This is Glycine--tRNA ligase beta subunit from Phenylobacterium zucineum (strain HLK1).